A 129-amino-acid polypeptide reads, in one-letter code: UPF0344 protein SSP1805 (129 aa).

The next 4 helical transmembrane spans lie at 1-21 (MLHMHIASWVLLIILFFAAYF), 36-56 (IHMLLRLFMLLVLISGFWVWI), 68-88 (MLLTLKMICGVAVVALMEVTI), and 100-120 (LMWTTIVVIILTMIIGIILPM).

Belongs to the UPF0344 family.

It localises to the cell membrane. The sequence is that of UPF0344 protein SSP1805 from Staphylococcus saprophyticus subsp. saprophyticus (strain ATCC 15305 / DSM 20229 / NCIMB 8711 / NCTC 7292 / S-41).